The primary structure comprises 233 residues: Ribose-5-phosphate isomerase A (233 aa).

Substrate contacts are provided by residues 28 to 31 (SGST), 83 to 86 (DGAD), and 96 to 99 (KGGG). The active-site Proton acceptor is E105. Substrate is bound at residue K123.

It belongs to the ribose 5-phosphate isomerase family. As to quaternary structure, homodimer.

The enzyme catalyses aldehydo-D-ribose 5-phosphate = D-ribulose 5-phosphate. Its pathway is carbohydrate degradation; pentose phosphate pathway; D-ribose 5-phosphate from D-ribulose 5-phosphate (non-oxidative stage): step 1/1. Catalyzes the reversible conversion of ribose-5-phosphate to ribulose 5-phosphate. In Maricaulis maris (strain MCS10) (Caulobacter maris), this protein is Ribose-5-phosphate isomerase A.